A 370-amino-acid polypeptide reads, in one-letter code: Pyrimidine monooxygenase RutA (370 aa).

FMN-binding positions include 49 to 50 (IK), N115, E124, 140 to 141 (RY), and S190.

Belongs to the NtaA/SnaA/DszA monooxygenase family. RutA subfamily.

It catalyses the reaction uracil + FMNH2 + NADH + O2 = (Z)-3-ureidoacrylate + FMN + NAD(+) + H2O + H(+). The enzyme catalyses thymine + FMNH2 + NADH + O2 = (Z)-2-methylureidoacrylate + FMN + NAD(+) + H2O + H(+). Functionally, catalyzes the pyrimidine ring opening between N-3 and C-4 by an unusual flavin hydroperoxide-catalyzed mechanism, adding oxygen atoms in the process to yield ureidoacrylate peracid, that immediately reacts with FMN forming ureidoacrylate and FMN-N(5)-oxide. The FMN-N(5)-oxide reacts spontaneously with NADH to produce FMN. Requires the flavin reductase RutF to regenerate FMN in vivo. The sequence is that of Pyrimidine monooxygenase RutA from Variovorax paradoxus (strain S110).